The chain runs to 696 residues: Glycine--tRNA ligase beta subunit (696 aa).

It belongs to the class-II aminoacyl-tRNA synthetase family. In terms of assembly, tetramer of two alpha and two beta subunits.

Its subcellular location is the cytoplasm. The enzyme catalyses tRNA(Gly) + glycine + ATP = glycyl-tRNA(Gly) + AMP + diphosphate. The polypeptide is Glycine--tRNA ligase beta subunit (Nitratidesulfovibrio vulgaris (strain DP4) (Desulfovibrio vulgaris)).